Here is a 668-residue protein sequence, read N- to C-terminus: tRNA 5-methylaminomethyl-2-thiouridine biosynthesis bifunctional protein MnmC (668 aa).

The tRNA (mnm(5)s(2)U34)-methyltransferase stretch occupies residues 1–245 (MKHYSIQPAN…KREMLCGVME (245 aa)). An FAD-dependent cmnm(5)s(2)U34 oxidoreductase region spans residues 270–668 (IGGGIACALL…LLKGKAVKAG (399 aa)).

In the N-terminal section; belongs to the methyltransferase superfamily. tRNA (mnm(5)s(2)U34)-methyltransferase family. The protein in the C-terminal section; belongs to the DAO family. It depends on FAD as a cofactor.

The protein localises to the cytoplasm. The enzyme catalyses 5-aminomethyl-2-thiouridine(34) in tRNA + S-adenosyl-L-methionine = 5-methylaminomethyl-2-thiouridine(34) in tRNA + S-adenosyl-L-homocysteine + H(+). Functionally, catalyzes the last two steps in the biosynthesis of 5-methylaminomethyl-2-thiouridine (mnm(5)s(2)U) at the wobble position (U34) in tRNA. Catalyzes the FAD-dependent demodification of cmnm(5)s(2)U34 to nm(5)s(2)U34, followed by the transfer of a methyl group from S-adenosyl-L-methionine to nm(5)s(2)U34, to form mnm(5)s(2)U34. The polypeptide is tRNA 5-methylaminomethyl-2-thiouridine biosynthesis bifunctional protein MnmC (Shigella boydii serotype 18 (strain CDC 3083-94 / BS512)).